We begin with the raw amino-acid sequence, 264 residues long: S-adenosylmethionine decarboxylase proenzyme (264 aa).

Serine 113 serves as the catalytic Schiff-base intermediate with substrate; via pyruvic acid. Serine 113 bears the Pyruvic acid (Ser); by autocatalysis mark. Catalysis depends on histidine 118, which acts as the Proton acceptor; for processing activity. Cysteine 141 serves as the catalytic Proton donor; for catalytic activity.

Belongs to the prokaryotic AdoMetDC family. Type 2 subfamily. Heterooctamer of four alpha and four beta chains arranged as a tetramer of alpha/beta heterodimers. Pyruvate serves as cofactor. In terms of processing, is synthesized initially as an inactive proenzyme. Formation of the active enzyme involves a self-maturation process in which the active site pyruvoyl group is generated from an internal serine residue via an autocatalytic post-translational modification. Two non-identical subunits are generated from the proenzyme in this reaction, and the pyruvate is formed at the N-terminus of the alpha chain, which is derived from the carboxyl end of the proenzyme. The post-translation cleavage follows an unusual pathway, termed non-hydrolytic serinolysis, in which the side chain hydroxyl group of the serine supplies its oxygen atom to form the C-terminus of the beta chain, while the remainder of the serine residue undergoes an oxidative deamination to produce ammonia and the pyruvoyl group blocking the N-terminus of the alpha chain.

The enzyme catalyses S-adenosyl-L-methionine + H(+) = S-adenosyl 3-(methylsulfanyl)propylamine + CO2. The protein operates within amine and polyamine biosynthesis; S-adenosylmethioninamine biosynthesis; S-adenosylmethioninamine from S-adenosyl-L-methionine: step 1/1. Functionally, catalyzes the decarboxylation of S-adenosylmethionine to S-adenosylmethioninamine (dcAdoMet), the propylamine donor required for the synthesis of the polyamines spermine and spermidine from the diamine putrescine. This is S-adenosylmethionine decarboxylase proenzyme from Xanthomonas campestris pv. campestris (strain B100).